Here is a 150-residue protein sequence, read N- to C-terminus: Ribosomal RNA large subunit methyltransferase H (150 aa).

Residues A100 and 118 to 123 (LSEMTF) each bind S-adenosyl-L-methionine.

Belongs to the RNA methyltransferase RlmH family. Homodimer.

It localises to the cytoplasm. It catalyses the reaction pseudouridine(1915) in 23S rRNA + S-adenosyl-L-methionine = N(3)-methylpseudouridine(1915) in 23S rRNA + S-adenosyl-L-homocysteine + H(+). Functionally, specifically methylates the pseudouridine at position 1915 (m3Psi1915) in 23S rRNA. The polypeptide is Ribosomal RNA large subunit methyltransferase H (Helicobacter pylori (strain J99 / ATCC 700824) (Campylobacter pylori J99)).